The sequence spans 320 residues: Putative fatty acid elongase 3 (320 aa).

Asn14 carries an N-linked (GlcNAc...) asparagine glycan. 6 consecutive transmembrane segments (helical) span residues 33–53, 67–87, 120–140, 145–165, 203–223, and 242–262; these read WMQN…AVIF, LDTP…LGFL, FWTE…IFIV, PLIF…WHAY, MAMV…IIGV, and LGLC…FFYH.

Belongs to the ELO family.

Its subcellular location is the membrane. It catalyses the reaction a very-long-chain acyl-CoA + malonyl-CoA + H(+) = a very-long-chain 3-oxoacyl-CoA + CO2 + CoA. It functions in the pathway lipid metabolism; fatty acid biosynthesis. Could be implicated in synthesis of very long chain fatty acids. May be required for normally rapid growth. This Caenorhabditis elegans protein is Putative fatty acid elongase 3 (elo-3).